The primary structure comprises 701 residues: Eukaryotic peptide chain release factor GTP-binding subunit (701 aa).

Polar residues predominate over residues 1–25 (MSDDQQYNQDKLSQDFQNTSIGSGE). Disordered regions lie at residues 1-63 (MSDD…YQGG), 91-124 (NQGYQGYQNNNRGGYNNYNNRGGYNNYNNYNQQD), and 164-259 (KLAN…VIQE). A several sort of repeats region spans residues 20–131 (SIGSGEQQQQ…QQDQQPVQNQ (112 aa)). Residues 26 to 40 (QQQQSYQQYQQQPQQ) show a composition bias toward low complexity. Over residues 41-54 (NNFNANSAPTFTPS) the composition is skewed to polar residues. A charged region spans residues 132–271 (GMSLADFQKQ…DEVDEEVVKD (140 aa)). The span at 170–224 (KAPETESKEATPAATEKEATPAATEKEATPAATEKEATPAATEKETTPAPAKKEA) shows a compositional bias: basic and acidic residues. A compositionally biased stretch (polar residues) spans 228 to 252 (SVKSESKPASKSTSKVATKESTPVT). A tr-type G domain is found at 276–501 (KDHVSIIFMG…FLDNMKTMQR (226 aa)). A G1 region spans residues 285–292 (GHVDAGKS). 285 to 292 (GHVDAGKS) is a GTP binding site. The tract at residues 341–345 (GKTIE) is G2. A Phosphothreonine modification is found at T359. Residues 362-365 (DAPG) form a G3 region. Residues 362 to 366 (DAPGH) and 424 to 427 (NKMD) each bind GTP. The G4 stretch occupies residues 424–427 (NKMD). Residues 465 to 467 (SGY) form a G5 region.

Belongs to the TRAFAC class translation factor GTPase superfamily. Classic translation factor GTPase family. ERF3 subfamily.

It localises to the cytoplasm. Functionally, involved in translation termination. Stimulates the activity of ERF1. Binds guanine nucleotides. This Debaryomyces hansenii (strain ATCC 36239 / CBS 767 / BCRC 21394 / JCM 1990 / NBRC 0083 / IGC 2968) (Yeast) protein is Eukaryotic peptide chain release factor GTP-binding subunit (SUP35).